The primary structure comprises 1498 residues: DNA-directed RNA polymerase subunit beta' (1498 aa).

Positions 67, 69, 82, and 85 each coordinate Zn(2+). Residues aspartate 499, aspartate 501, and aspartate 503 each contribute to the Mg(2+) site. Residues cysteine 867, cysteine 943, cysteine 950, and cysteine 953 each contribute to the Zn(2+) site.

It belongs to the RNA polymerase beta' chain family. The RNAP catalytic core consists of 2 alpha, 1 beta, 1 beta' and 1 omega subunit. When a sigma factor is associated with the core the holoenzyme is formed, which can initiate transcription. Mg(2+) serves as cofactor. It depends on Zn(2+) as a cofactor.

It catalyses the reaction RNA(n) + a ribonucleoside 5'-triphosphate = RNA(n+1) + diphosphate. Functionally, DNA-dependent RNA polymerase catalyzes the transcription of DNA into RNA using the four ribonucleoside triphosphates as substrates. The chain is DNA-directed RNA polymerase subunit beta' from Chlorobium phaeobacteroides (strain BS1).